Consider the following 429-residue polypeptide: Trigger factor (429 aa).

Positions glycine 164–proline 249 constitute a PPIase FKBP-type domain.

The protein belongs to the FKBP-type PPIase family. Tig subfamily.

It localises to the cytoplasm. It carries out the reaction [protein]-peptidylproline (omega=180) = [protein]-peptidylproline (omega=0). Its function is as follows. Involved in protein export. Acts as a chaperone by maintaining the newly synthesized protein in an open conformation. Functions as a peptidyl-prolyl cis-trans isomerase. The polypeptide is Trigger factor (Anaeromyxobacter dehalogenans (strain 2CP-C)).